The primary structure comprises 184 residues: J-type co-chaperone JAC1, mitochondrial (184 aa).

A mitochondrion-targeting transit peptide spans 1–10 (MLKYLVQRRF). Residues 13-82 (TFYELFPKTF…LRRSQYMLKL (70 aa)) enclose the J domain. The HSP70 binding signature appears at 48 to 50 (HPD). Positions 71–184 (DPLRRSQYML…APGKQLEMNH (114 aa)) are interaction with ISU1.

It belongs to the HscB family. Interacts with ISU1 and SSQ1.

It is found in the mitochondrion matrix. Functionally, co-chaperone required for the assembly of iron-sulfur (Fe/S) clusters in mitochondria. Stimulates the ATPase activity of its specialized Hsp70 chaperone partner SSQ1, to mediate the transfer of iron-sulfur clusters from ISU1 to GRX5. Binds to the substrate protein ISU1 and targets it to SSQ1. This is J-type co-chaperone JAC1, mitochondrial from Saccharomyces cerevisiae (strain ATCC 204508 / S288c) (Baker's yeast).